Reading from the N-terminus, the 61-residue chain is MAVPKRKTSPSRRGMRRSADALKQPTYVEDKDSGELRRPHHLDLKTGMYRGRQILKPKAEA.

Basic residues predominate over residues 1 to 16 (MAVPKRKTSPSRRGMR). The segment at 1–61 (MAVPKRKTSP…RQILKPKAEA (61 aa)) is disordered. Residues 28–44 (VEDKDSGELRRPHHLDL) are compositionally biased toward basic and acidic residues.

This sequence belongs to the bacterial ribosomal protein bL32 family.

The chain is Large ribosomal subunit protein bL32 from Xanthobacter autotrophicus (strain ATCC BAA-1158 / Py2).